The following is a 385-amino-acid chain: Putative transport protein BpOF4_00890 (385 aa).

The next 8 membrane-spanning stretches (helical) occupy residues 42–62 (TIWIIISILLFLVAAYFILPV), 63–83 (SLPLVAALLTALILTPAVNAL), 93–113 (VAVMLVFTVFVVFIGLSGYYI), 191–211 (SIPGYLVTFLVYLIALFLFML), 255–275 (IIIFIVTLIGLLFIAPEVALL), 276–296 (MAFIIWLIDFVPIIGSIVILA), 304–324 (IVGDVSTGSKLLILAAVLLII), and 350–370 (LGLMLFGVIGFIIGPLLVIAF).

It belongs to the autoinducer-2 exporter (AI-2E) (TC 2.A.86) family.

It localises to the cell membrane. The polypeptide is Putative transport protein BpOF4_00890 (Alkalihalophilus pseudofirmus (strain ATCC BAA-2126 / JCM 17055 / OF4) (Bacillus pseudofirmus)).